The sequence spans 230 residues: UPF0173 metal-dependent hydrolase MM_2300 (230 aa).

This sequence belongs to the UPF0173 family.

The chain is UPF0173 metal-dependent hydrolase MM_2300 from Methanosarcina mazei (strain ATCC BAA-159 / DSM 3647 / Goe1 / Go1 / JCM 11833 / OCM 88) (Methanosarcina frisia).